A 202-amino-acid polypeptide reads, in one-letter code: Imidazoleglycerol-phosphate dehydratase (202 aa).

It belongs to the imidazoleglycerol-phosphate dehydratase family.

The protein resides in the cytoplasm. The catalysed reaction is D-erythro-1-(imidazol-4-yl)glycerol 3-phosphate = 3-(imidazol-4-yl)-2-oxopropyl phosphate + H2O. Its pathway is amino-acid biosynthesis; L-histidine biosynthesis; L-histidine from 5-phospho-alpha-D-ribose 1-diphosphate: step 6/9. This is Imidazoleglycerol-phosphate dehydratase from Parasynechococcus marenigrum (strain WH8102).